The chain runs to 229 residues: Large ribosomal subunit protein uL1 (229 aa).

It belongs to the universal ribosomal protein uL1 family. As to quaternary structure, part of the 50S ribosomal subunit.

Its function is as follows. Binds directly to 23S rRNA. The L1 stalk is quite mobile in the ribosome, and is involved in E site tRNA release. In terms of biological role, protein L1 is also a translational repressor protein, it controls the translation of the L11 operon by binding to its mRNA. This is Large ribosomal subunit protein uL1 from Clostridium botulinum (strain Loch Maree / Type A3).